Reading from the N-terminus, the 320-residue chain is Transaldolase (320 aa).

K126 (schiff-base intermediate with substrate) is an active-site residue.

It belongs to the transaldolase family. Type 1 subfamily. Homodimer.

It is found in the cytoplasm. The catalysed reaction is D-sedoheptulose 7-phosphate + D-glyceraldehyde 3-phosphate = D-erythrose 4-phosphate + beta-D-fructose 6-phosphate. It functions in the pathway carbohydrate degradation; pentose phosphate pathway; D-glyceraldehyde 3-phosphate and beta-D-fructose 6-phosphate from D-ribose 5-phosphate and D-xylulose 5-phosphate (non-oxidative stage): step 2/3. Its function is as follows. Transaldolase is important for the balance of metabolites in the pentose-phosphate pathway. The sequence is that of Transaldolase from Bordetella pertussis (strain Tohama I / ATCC BAA-589 / NCTC 13251).